The following is a 382-amino-acid chain: Beta-1,4-galactosyltransferase 6 (382 aa).

Topologically, residues 1 to 14 (MSVLRRMMRVSNRS) are cytoplasmic. Residues 15–35 (LLAFIFFFSLSSSCLYFIYVA) traverse the membrane as a helical; Signal-anchor for type II membrane protein segment. Residues 36-382 (PGIANTYLFM…MPELAPIEDY (347 aa)) are Lumenal-facing. Asparagine 71, asparagine 75, asparagine 83, asparagine 84, asparagine 99, and asparagine 122 each carry an N-linked (GlcNAc...) asparagine glycan. A disulfide bridge links cysteine 108 with cysteine 152. UDP-alpha-D-galactose-binding positions include 163–167 (PFRNR), 202–204 (FNR), 229–230 (VD), tyrosine 258, and tryptophan 290. Cysteine 223 and cysteine 242 are oxidised to a cystine. Position 230 (aspartate 230) interacts with Mn(2+). 292–295 (GEDD) is an N-acetyl-D-glucosamine binding site. N-linked (GlcNAc...) asparagine glycosylation is present at asparagine 307. Histidine 323 is a Mn(2+) binding site. 323-324 (HH) provides a ligand contact to UDP-alpha-D-galactose. Arginine 334 contributes to the N-acetyl-D-glucosamine binding site. An N-linked (GlcNAc...) asparagine glycan is attached at asparagine 367.

It belongs to the glycosyltransferase 7 family. The cofactor is Mn(2+). Mg(2+) is required as a cofactor. As to expression, high expression in brain and adrenal gland, lower in liver, lung, colon and peripheral white blood cells.

It localises to the golgi apparatus. The protein localises to the golgi stack membrane. It carries out the reaction a beta-D-glucosyl-(1&lt;-&gt;1')-N-acylsphing-4-enine + UDP-alpha-D-galactose = a beta-D-Gal-(1-&gt;4)-beta-D-Glc-(1&lt;-&gt;1)-Cer(d18:1(4E)) + UDP + H(+). Its pathway is protein modification; protein glycosylation. It participates in sphingolipid metabolism. With respect to regulation, inhibited by EDTA. In terms of biological role, catalyzes the synthesis of lactosylceramide (LacCer) via the transfer of galactose from UDP-galactose to glucosylceramide (GlcCer). LacCer is the starting point in the biosynthesis of all gangliosides (membrane-bound glycosphingolipids) which play pivotal roles in the CNS including neuronal maturation and axonal and myelin formation. This chain is Beta-1,4-galactosyltransferase 6, found in Homo sapiens (Human).